The chain runs to 313 residues: MGDDIMPISNLAKESEVRAVKDIPCKNIETDNHLEIGLSSGLSRSKDTSKFKKNSINTIKLIDDIIALHNDPKGNKLLWNDNWQDKIINRDLANIFEKIDESVSELGGLEMYQEMVGVNPYDPTEPVCGLSAQNIFKLMTEGEHAVDPVEMAQTGKIDGNEFAESVDQLSSAKNYVALVNDRRLGHMFLIDIPSNDQETVGYIYQSDLGQGALPPLKIADWLNSRGKDAVSLNKLKKLLSREFNLLSDDEKRALISETLDIHKDVSNVELDRIKRDRGVDIYLTEYDVNNFYENIETLKSKLSNYDKKLSKPK.

Active-site residues include Cys-128, His-186, and Gln-205.

It belongs to the Cif family.

Its subcellular location is the secreted. It is found in the host nucleus. It carries out the reaction L-glutaminyl-[protein] + H2O = L-glutamyl-[protein] + NH4(+). Protein-glutamine deamidase effector that inhibits the host cell cycle and other key cellular processes such as the actin network and programmed-cell death. Acts by mediating the side chain deamidation of 'Gln-40' of host NEDD8, converting it to glutamate, thereby abolishing the activity of cullin-RING-based E3 ubiquitin-protein ligase complexes (CRL complexes). Inactivation of CRL complexes prevents ubiquitination and subsequent degradation of the cyclin-dependent kinase inhibitors CDKN1A/p21 and CDKN1B/p27, leading to G1 and G2 cell cycle arrests in host cells. Deamidation of 'Gln-40' of host NEDD8 also triggers macrophage-specific programmed cell death. Also able to catalyze deamidation of 'Gln-40' of host ubiquitin in vitro; however, NEDD8 constitutes the preferred substrate in vivo. The polypeptide is Protein-glutamine deamidase Cif (Photorhabdus laumondii subsp. laumondii (strain DSM 15139 / CIP 105565 / TT01) (Photorhabdus luminescens subsp. laumondii)).